The primary structure comprises 61 residues: Lens epithelial cell protein LEP503 (61 aa).

In terms of tissue distribution, restricted to lens epithelial cells.

In terms of biological role, may play a role in lens epithelial cell differentiation. In Homo sapiens (Human), this protein is Lens epithelial cell protein LEP503 (LENEP).